The sequence spans 309 residues: Porphobilinogen deaminase (309 aa).

An S-(dipyrrolylmethanemethyl)cysteine modification is found at Cys-241.

Belongs to the HMBS family. Monomer. The cofactor is dipyrromethane.

It carries out the reaction 4 porphobilinogen + H2O = hydroxymethylbilane + 4 NH4(+). It participates in porphyrin-containing compound metabolism; protoporphyrin-IX biosynthesis; coproporphyrinogen-III from 5-aminolevulinate: step 2/4. Tetrapolymerization of the monopyrrole PBG into the hydroxymethylbilane pre-uroporphyrinogen in several discrete steps. This Bacillus cereus (strain AH820) protein is Porphobilinogen deaminase.